The primary structure comprises 114 residues: Large ribosomal subunit protein uL22 (114 aa).

Belongs to the universal ribosomal protein uL22 family. As to quaternary structure, part of the 50S ribosomal subunit.

This protein binds specifically to 23S rRNA; its binding is stimulated by other ribosomal proteins, e.g. L4, L17, and L20. It is important during the early stages of 50S assembly. It makes multiple contacts with different domains of the 23S rRNA in the assembled 50S subunit and ribosome. Its function is as follows. The globular domain of the protein is located near the polypeptide exit tunnel on the outside of the subunit, while an extended beta-hairpin is found that lines the wall of the exit tunnel in the center of the 70S ribosome. In Streptococcus pyogenes serotype M6 (strain ATCC BAA-946 / MGAS10394), this protein is Large ribosomal subunit protein uL22.